A 227-amino-acid chain; its full sequence is MISSKASDYQQRIGYVFTDPSLLLQALRHRSAGTPHNERLEFLGDSVVNLLIAEALFQRWPRADEGALTRARSELVRETSLASIARTMQLGEQLILGPGELKSGGHRRDSILADAVEAVIAAIYLDADLATCRTVVLPWFETALTALPVGKPEKDPKTRLQEWLQARQWSLPVYELIFESGDPHTKHFRVSCTLGELKLRTEGEGSSRRLAEQDAASHAIDQLDSNK.

The RNase III domain occupies Ala6 to Asp128. Residue Glu41 participates in Mg(2+) binding. Asp45 is a catalytic residue. 2 residues coordinate Mg(2+): Asp114 and Glu117. The active site involves Glu117. In terms of domain architecture, DRBM spans Asp155–Ser225. Basic and acidic residues predominate over residues Gly203–Glu212. Residues Gly203–Lys227 are disordered.

Belongs to the ribonuclease III family. As to quaternary structure, homodimer. Requires Mg(2+) as cofactor.

It localises to the cytoplasm. It carries out the reaction Endonucleolytic cleavage to 5'-phosphomonoester.. In terms of biological role, digests double-stranded RNA. Involved in the processing of primary rRNA transcript to yield the immediate precursors to the large and small rRNAs (23S and 16S). Processes some mRNAs, and tRNAs when they are encoded in the rRNA operon. Processes pre-crRNA and tracrRNA of type II CRISPR loci if present in the organism. This chain is Ribonuclease 3, found in Xylella fastidiosa (strain M23).